Here is a 122-residue protein sequence, read N- to C-terminus: Phospholipase A2 crotoxin basic subunit CBb (122 aa).

Cystine bridges form between cysteine 26-cysteine 115, cysteine 28-cysteine 44, cysteine 43-cysteine 95, cysteine 49-cysteine 122, cysteine 50-cysteine 88, cysteine 57-cysteine 81, and cysteine 75-cysteine 86. Ca(2+) contacts are provided by tyrosine 27, glycine 29, and glycine 31. Histidine 47 is a catalytic residue. Residue aspartate 48 participates in Ca(2+) binding. Aspartate 89 is an active-site residue.

It belongs to the phospholipase A2 family. Group II subfamily. D49 sub-subfamily. Heterodimer of one of the acidic (CA1, CA2, CA3 or CA4) and one of the basic (CBa1, CBa2, CBb, CBc or CBd) subunits; non-covalently linked. The acidic subunit is non-toxic, without enzymatic activity and comprises 3 peptides that are cross-linked by 5 disulfide bridges. The basic subunit is toxic, has phospholipase A2 activity and is composed of a single chain. Multiple variants of each subunit give different crotoxin complexes that can be subdivided into 2 classes: (1) those of high toxicity, low PLA2 activity (CBb, CBc and CBd linked with high affinity to any CA) and high stability (K(d)=4.5 nM) and (2) those of moderate toxicity, high PLA2 activity (CBa2 linked with low affinity to any CA) and low stability (K(d)=25 nM). Requires Ca(2+) as cofactor. In terms of tissue distribution, expressed by the venom gland.

Its subcellular location is the secreted. It catalyses the reaction a 1,2-diacyl-sn-glycero-3-phosphocholine + H2O = a 1-acyl-sn-glycero-3-phosphocholine + a fatty acid + H(+). Its function is as follows. Heterodimer CA-CB: Crotoxin is a potent presynaptic neurotoxin that possesses phospholipase A2 (PLA2) activity and exerts a lethal action by blocking neuromuscular transmission. It consists of a non-covalent association of a basic and weakly toxic PLA2 subunit (CBa2, CBb, CBc, or CBd), with a small acidic, non-enzymatic and non-toxic subunit (CA1, CA2, CA3 or CA4). The complex acts by binding to a specific 48-kDa protein (R48) receptor located on presynaptic membranes, forming a transient ternary complex CA-CB-R48, followed by dissociation of the CA-CB complex and release of the CA subunit. At equilibrium, only the CB subunits remain associated with the specific crotoxin receptor. In addition to neurotoxicity, crotoxin has been found to exert myotoxicity, nephrotoxicity, and cardiovascular toxicity. Moreover, anti-inflammatory, immunomodulatory, anti-tumor and analgesic effects of crotoxin have also been reported. Functionally, monomer CBb: The basic subunit of crotoxin is a snake venom phospholipase A2 (PLA2) that exhibits weak neurotoxicity (10-fold less than the heterodimer) and strong anticoagulant effects by binding to factor Xa (F10) and inhibiting the prothrombinase activity. In addition, it shows the same effects described for the heterodimer and binds the nucleotide-binding domain (NBD1) of CFTR chloride channels and increases the channel current. PLA2 catalyzes the calcium-dependent hydrolysis of the 2-acyl groups in 3-sn-phosphoglycerides. The polypeptide is Phospholipase A2 crotoxin basic subunit CBb (Crotalus durissus terrificus (South American rattlesnake)).